A 107-amino-acid chain; its full sequence is UPF0060 membrane protein Atu1058 (107 aa).

4 helical membrane-spanning segments follow: residues 5–25, 32–52, 59–79, and 85–105; these read LIYVLAAVAEIAGCFSFWAWL, WILLPGMVALAAFAWLLTLVA, AYAAYGGIYIAASLFWLWGVE, and RWDIAGGVVCLAGTAIILFGP.

This sequence belongs to the UPF0060 family.

It localises to the cell inner membrane. This Agrobacterium fabrum (strain C58 / ATCC 33970) (Agrobacterium tumefaciens (strain C58)) protein is UPF0060 membrane protein Atu1058.